The primary structure comprises 534 residues: Lariat debranching enzyme (534 aa).

A divalent metal cation contacts are provided by Cys8, His10, Asp39, and Asn84. Residues Ser124–Arg154 are lariat recognition loop. His174, His226, and His228 together coordinate a divalent metal cation. 2 disordered regions span residues Lys242 to Ser275 and Thr501 to Asp534.

This sequence belongs to the lariat debranching enzyme family. Requires Fe(2+) as cofactor. It depends on Zn(2+) as a cofactor. The cofactor is Mn(2+).

The protein resides in the nucleus. Its activity is regulated as follows. Active in presence of diverse metals including Fe(2+), Zn(2+), Mn(2+). Binds two metal cations in two adjacent alpha and beta metal-binding pockets. Functionally, cleaves the 2'-5' phosphodiester linkage at the branch point of lariat intron pre-mRNAs after splicing and converts them into linear molecules that are subsequently degraded. It thereby facilitates ribonucleotide turnover. In Drosophila melanogaster (Fruit fly), this protein is Lariat debranching enzyme (ldbr).